Reading from the N-terminus, the 286-residue chain is Deaminated glutathione amidase (286 aa).

One can recognise a CN hydrolase domain in the interval 4–252 (ANVALLQLCS…VSALKVKIET (249 aa)). Glu42 (proton acceptor) is an active-site residue. Residue Lys115 is part of the active site. The Nucleophile role is filled by Cys157.

Belongs to the carbon-nitrogen hydrolase superfamily. NIT1/NIT2 family.

It catalyses the reaction N-(4-oxoglutaryl)-L-cysteinylglycine + H2O = L-cysteinylglycine + 2-oxoglutarate. Its function is as follows. Hydrolyzes deaminated glutathione (dGSH, 2-oxoglutaramate) to alpha-ketoglutarate (alpha-KG) and cysteinylglycine (specific activity 6.50 umol/min/mg), has less activity against alpha-ketoglutaramate (a-KGM, specific activity 0.20 umol/min/mg), very little activity on glutathione and none on L-glutamine. May function as a metabolite repair enzyme. This chain is Deaminated glutathione amidase, found in Yersinia enterocolitica.